A 559-amino-acid chain; its full sequence is 3-phosphoinositide-dependent protein kinase 1 (559 aa).

Tyrosine 9 carries the phosphotyrosine; by SRC and INSR modification. Serine 25 carries the post-translational modification Phosphoserine. The interval 25–83 is disordered; that stretch reads SPSMVRSQTEPGSSPGIPSGVSRQGSTMDGTTAEARPSTNPLQQHPAQLPPQPRKKRPE. Low complexity predominate over residues 35 to 44; that stretch reads PGSSPGIPSG. The segment covering 45-54 has biased composition (polar residues); the sequence is VSRQGSTMDG. In terms of domain architecture, Protein kinase spans 85-345; that stretch reads FKFGKILGEG…YGPLKAHPFF (261 aa). ATP contacts are provided by residues 95 to 97 and lysine 114; that span reads SFS. A PIF-pocket region spans residues 116 to 160; sequence LEKRHIIKENKVPYVTRERDVMSRLDHPFFVKLYFTFQDDEKLYF. ATP is bound by residues 163–165 and glutamate 169; that span reads SYA. Aspartate 208 acts as the Proton acceptor in catalysis. Positions 212 and 226 each coordinate ATP. A Phosphoserine modification is found at serine 244. Lysine 307 is modified (N6-acetyllysine). Residue threonine 357 is modified to Phosphothreonine; by MELK. Phosphotyrosine; by SRC and INSR occurs at positions 376 and 379. Serine 396 bears the Phosphoserine mark. Serine 397 carries the post-translational modification Phosphoserine; by MAP3K5. The residue at position 399 (serine 399) is a Phosphoserine. At serine 401 the chain carries Phosphoserine; by MAP3K5. At serine 413 the chain carries Phosphoserine. Positions 462-553 constitute a PH domain; that stretch reads KMGPVDKRKG…EVWRQQYQSN (92 aa). Position 504 is a phosphoserine; by PKC/PRKCQ (serine 504). Phosphothreonine; by autocatalysis is present on threonine 516. Position 532 is a phosphoserine; by PKC/PRKCQ (serine 532).

It belongs to the protein kinase superfamily. AGC Ser/Thr protein kinase family. PDPK1 subfamily. As to quaternary structure, homodimer in its autoinhibited state. Active as monomer. Interacts with NPRL2, PAK1, PTK2B, GRB14, STRAP and IKKB. The Tyr-9 phosphorylated form interacts with SRC, RASA1 and CRK (via their SH2 domains). Interacts with SGK3 in a phosphorylation-dependent manner. The tyrosine-phosphorylated form interacts with PTPN6. The Ser-244 phosphorylated form interacts with YWHAH and YWHAQ. Binds INSR in response to insulin. Interacts (via PH domain) with SMAD3, SMAD4 and SMAD7. Interacts with PKN2; the interaction stimulates PDPK1 autophosphorylation, its PI(3,4,5)P3-dependent kinase activity toward 'Ser-473' of AKT1 but also activates its kinase activity toward PRKCD and PRKCZ. Interacts with PKN1 (via C-terminus) and PPARG. Post-translationally, phosphorylation on Ser-244 in the activation loop is required for full activity. PDPK1 itself can autophosphorylate Ser-244, leading to its own activation. Autophosphorylation is inhibited by the apoptotic C-terminus cleavage product of PKN2. Tyr-9 phosphorylation is critical for stabilization of both PDPK1 and the PDPK1/SRC complex via HSP90-mediated protection of PDPK1 degradation. Angiotensin II stimulates the tyrosine phosphorylation of PDPK1 in vascular smooth muscle in a calcium- and SRC-dependent manner. Phosphorylated on Tyr-9, Tyr-376 and Tyr-379 by INSR in response to insulin. Palmitate negatively regulates autophosphorylation at Ser-244 and palmitate-induced phosphorylation at Ser-532 and Ser-504 by PKC/PRKCQ negatively regulates its ability to phosphorylate PKB/AKT1. Phosphorylation at Thr-357 by MELK partially inhibits kinase activity, the inhibition is cooperatively enhanced by phosphorylation at Ser-397 and Ser-401 by MAP3K5. Monoubiquitinated in the kinase domain, deubiquitinated by USP4. In terms of tissue distribution, highly expressed in heart, brain, liver and testis, also expressed in embryonic cells.

It is found in the cytoplasm. The protein localises to the nucleus. Its subcellular location is the cell membrane. It localises to the cell junction. The protein resides in the focal adhesion. The catalysed reaction is L-seryl-[protein] + ATP = O-phospho-L-seryl-[protein] + ADP + H(+). It catalyses the reaction L-threonyl-[protein] + ATP = O-phospho-L-threonyl-[protein] + ADP + H(+). Its activity is regulated as follows. Homodimerization regulates its activity by maintaining the kinase in an autoinhibitory conformation. NPRL2 down-regulates its activity by interfering with tyrosine phosphorylation at the Tyr-9, Tyr-376 and Tyr-379 residues. The 14-3-3 protein YWHAQ acts as a negative regulator by association with the residues surrounding the Ser-244 residue. STRAP positively regulates its activity by enhancing its autophosphorylation and by stimulating its dissociation from YWHAQ. SMAD2, SMAD3, SMAD4 and SMAD7 also positively regulate its activity by stimulating its dissociation from YWHAQ. Activated by phosphorylation on Tyr-9, Tyr-376 and Tyr-379 by INSR in response to insulin. Functionally, serine/threonine kinase which acts as a master kinase, phosphorylating and activating a subgroup of the AGC family of protein kinases. Its targets include: protein kinase B (PKB/AKT1, PKB/AKT2, PKB/AKT3), p70 ribosomal protein S6 kinase (RPS6KB1), p90 ribosomal protein S6 kinase (RPS6KA1, RPS6KA2 and RPS6KA3), cyclic AMP-dependent protein kinase (PRKACA), protein kinase C (PRKCD and PRKCZ), serum and glucocorticoid-inducible kinase (SGK1, SGK2 and SGK3), p21-activated kinase-1 (PAK1), TSSK3, protein kinase PKN (PKN1 and PKN2). Plays a central role in the transduction of signals from insulin by providing the activating phosphorylation to PKB/AKT1, thus propagating the signal to downstream targets controlling cell proliferation and survival, as well as glucose and amino acid uptake and storage. Negatively regulates the TGF-beta-induced signaling by: modulating the association of SMAD3 and SMAD7 with TGF-beta receptor, phosphorylating SMAD2, SMAD3, SMAD4 and SMAD7, preventing the nuclear translocation of SMAD3 and SMAD4 and the translocation of SMAD7 from the nucleus to the cytoplasm in response to TGF-beta. Activates PPARG transcriptional activity and promotes adipocyte differentiation. Activates the NF-kappa-B pathway via phosphorylation of IKKB. The tyrosine phosphorylated form is crucial for the regulation of focal adhesions by angiotensin II. Controls proliferation, survival, and growth of developing pancreatic cells. Participates in the regulation of Ca(2+) entry and Ca(2+)-activated K(+) channels of mast cells. Essential for the motility of vascular endothelial cells (ECs) and is involved in the regulation of their chemotaxis. Plays a critical role in cardiac homeostasis by serving as a dual effector for cell survival and beta-adrenergic response. Plays an important role during thymocyte development by regulating the expression of key nutrient receptors on the surface of pre-T cells and mediating Notch-induced cell growth and proliferative responses. Provides negative feedback inhibition to toll-like receptor-mediated NF-kappa-B activation in macrophages. The protein is 3-phosphoinositide-dependent protein kinase 1 (Pdpk1) of Mus musculus (Mouse).